The primary structure comprises 902 residues: Cytosolic 10-formyltetrahydrofolate dehydrogenase (902 aa).

Residues 1 to 310 (MKIAVIGQSL…LASNFFKGAA (310 aa)) are hydrolase domain. A Phosphoserine modification is found at serine 9. Lysine 38 carries the N6-succinyllysine modification. 88–90 (QFI) is a binding site for (6R)-10-formyltetrahydrofolate. Histidine 106 acts as the Proton donor in catalysis. Aspartate 142 is a binding site for (6R)-10-formyltetrahydrofolate. One can recognise a Carrier domain in the interval 318–395 (EAELVTAEAV…DFIQLLVRKL (78 aa)). Position 354 is an O-(pantetheine 4'-phosphoryl)serine (serine 354). An aldehyde dehydrogenase domain region spans residues 417–902 (TIRIPHQLFI…LRVKTVTFEY (486 aa)). NADP(+)-binding positions include 571 to 573 (IPW) and 597 to 600 (KPAQ). Phosphoserine is present on residues serine 629 and serine 631. NADP(+) contacts are provided by residues 630–635 (GSLVGQ) and 650–651 (GS). Lysine 660 is subject to N6-succinyllysine. The Proton acceptor role is filled by glutamate 673. Residue 673 to 674 (EL) participates in NADP(+) binding. Residue cysteine 707 is the Proton donor of the active site. Residue lysine 757 participates in NADP(+) binding. An N6-succinyllysine modification is found at lysine 767. 804-806 (ESF) provides a ligand contact to NADP(+). A Phosphoserine modification is found at serine 825. Lysine 882 carries the post-translational modification N6-acetyllysine.

It in the N-terminal section; belongs to the GART family. In the C-terminal section; belongs to the aldehyde dehydrogenase family. ALDH1L subfamily. In terms of assembly, homotetramer. Post-translationally, phosphopantetheinylation at Ser-354 by AASDHPPT is required for the formyltetrahydrofolate dehydrogenase activity.

It is found in the cytoplasm. It localises to the cytosol. The catalysed reaction is (6R)-10-formyltetrahydrofolate + NADP(+) + H2O = (6S)-5,6,7,8-tetrahydrofolate + CO2 + NADPH + H(+). In terms of biological role, cytosolic 10-formyltetrahydrofolate dehydrogenase that catalyzes the NADP(+)-dependent conversion of 10-formyltetrahydrofolate to tetrahydrofolate and carbon dioxide. May also have an NADP(+)-dependent aldehyde dehydrogenase activity towards formaldehyde, acetaldehyde, propionaldehyde, and benzaldehyde. The chain is Cytosolic 10-formyltetrahydrofolate dehydrogenase from Pongo abelii (Sumatran orangutan).